We begin with the raw amino-acid sequence, 190 residues long: MRGIGRYHAPVDGHAALDRAIRKRIDFPKKGILYYDITGVLMNAAVFRYCLDQMVEFYRDEHVTAVAAIESRGFIFAAPFADRMGIPLILVRKAGKLPGDTYSCSYSLEYGKATVEVHKSDVVAGARVLLTDDLIATGGTLNAARTMLRAGGAEVVGFFAVVGLPFLRYHELIGDLPVRTLIEYNQETSN.

Belongs to the purine/pyrimidine phosphoribosyltransferase family. In terms of assembly, homodimer.

The protein resides in the cytoplasm. It carries out the reaction AMP + diphosphate = 5-phospho-alpha-D-ribose 1-diphosphate + adenine. It participates in purine metabolism; AMP biosynthesis via salvage pathway; AMP from adenine: step 1/1. Catalyzes a salvage reaction resulting in the formation of AMP, that is energically less costly than de novo synthesis. The sequence is that of Adenine phosphoribosyltransferase from Treponema pallidum (strain Nichols).